A 350-amino-acid polypeptide reads, in one-letter code: Aminomethyltransferase (350 aa).

Belongs to the GcvT family. As to quaternary structure, the glycine cleavage system is composed of four proteins: P, T, L and H.

The enzyme catalyses N(6)-[(R)-S(8)-aminomethyldihydrolipoyl]-L-lysyl-[protein] + (6S)-5,6,7,8-tetrahydrofolate = N(6)-[(R)-dihydrolipoyl]-L-lysyl-[protein] + (6R)-5,10-methylene-5,6,7,8-tetrahydrofolate + NH4(+). Its function is as follows. The glycine cleavage system catalyzes the degradation of glycine. This chain is Aminomethyltransferase, found in Aquifex aeolicus (strain VF5).